We begin with the raw amino-acid sequence, 226 residues long: tRNA (guanine-N(7)-)-methyltransferase (226 aa).

S-adenosyl-L-methionine contacts are provided by Glu57, Glu82, Asp109, and Asp132. Asp132 is an active-site residue. Residues Lys136, Asp168, and Thr205 to Glu208 each bind substrate.

It belongs to the class I-like SAM-binding methyltransferase superfamily. TrmB family.

The enzyme catalyses guanosine(46) in tRNA + S-adenosyl-L-methionine = N(7)-methylguanosine(46) in tRNA + S-adenosyl-L-homocysteine. It participates in tRNA modification; N(7)-methylguanine-tRNA biosynthesis. In terms of biological role, catalyzes the formation of N(7)-methylguanine at position 46 (m7G46) in tRNA. This chain is tRNA (guanine-N(7)-)-methyltransferase, found in Legionella pneumophila subsp. pneumophila (strain Philadelphia 1 / ATCC 33152 / DSM 7513).